A 565-amino-acid polypeptide reads, in one-letter code: Adenine deaminase (565 aa).

Belongs to the metallo-dependent hydrolases superfamily. Adenine deaminase family. Mn(2+) is required as a cofactor.

It catalyses the reaction adenine + H2O + H(+) = hypoxanthine + NH4(+). The sequence is that of Adenine deaminase from Lactobacillus delbrueckii subsp. bulgaricus (strain ATCC 11842 / DSM 20081 / BCRC 10696 / JCM 1002 / NBRC 13953 / NCIMB 11778 / NCTC 12712 / WDCM 00102 / Lb 14).